The following is a 119-amino-acid chain: Large ribosomal subunit protein bL20 (119 aa).

It belongs to the bacterial ribosomal protein bL20 family.

Functionally, binds directly to 23S ribosomal RNA and is necessary for the in vitro assembly process of the 50S ribosomal subunit. It is not involved in the protein synthesizing functions of that subunit. The protein is Large ribosomal subunit protein bL20 of Polaromonas sp. (strain JS666 / ATCC BAA-500).